We begin with the raw amino-acid sequence, 793 residues long: Short transient receptor potential channel 1 (793 aa).

Residues 1–30 (MMAALYPSTDLSGASSSSLPSSPSSSSPNE) form a disordered region. Residues 1 to 345 (MMAALYPSTD…FGQMSGYRRK (345 aa)) lie on the Cytoplasmic side of the membrane. Over residues 15–28 (SSSSLPSSPSSSSP) the composition is skewed to low complexity. ANK repeat units lie at residues 46–75 (LNEK…SGDL), 83–109 (LGRN…YGCQ), 111–156 (ADAL…EYST), and 158–180 (MDVA…MLLK). Zn(2+) contacts are provided by His189, Cys193, Cys195, and Cys198. An intramembrane region (discontinuously helical) is located at residues 346–379 (PTCKKIMTVLTVGIFWPVLSLCYLIAPKSQFGRI). Over 380 to 386 (IHTPFMK) the chain is Cytoplasmic. The helical transmembrane segment at 387–404 (FIIHGASYFTFLLLLNLY) threads the bilayer. The Extracellular portion of the chain corresponds to 405-422 (SLVYNEDKKNTMGPALER). Residues 423-439 (IDYLLILWIIGMIWSDI) traverse the membrane as a helical segment. Over 440–455 (KRLWYEGLEDFLEESR) the chain is Cytoplasmic. Residues 456 to 475 (NQLSFVMNSLYLATFALKVV) form a helical membrane-spanning segment. The Extracellular portion of the chain corresponds to 476 to 496 (AHNKFHDFADRKDWDAFHPTL). Residues 497-517 (VAEGLFAFANVLSYLRLFFMY) traverse the membrane as a helical segment. Residues 518 to 536 (TTSSILGPLQISMGQMLQD) lie on the Cytoplasmic side of the membrane. A helical transmembrane segment spans residues 537–558 (FGKFLGMFLLVLFSFTIGLTQL). Topologically, residues 559-623 (YDKGYTSKEQ…GEELQSFVGA (65 aa)) are extracellular. A disulfide bond links Cys571 and Cys576. Residues 624 to 644 (VIVGTYNVVVVIVLTKLLVAM) form a helical membrane-spanning segment. Residues 645–793 (LHKSFQLIAN…SKYAMFYPRN (149 aa)) are Cytoplasmic-facing.

It belongs to the transient receptor (TC 1.A.4) family. STrpC subfamily. TRPC1 sub-subfamily. Heterotetramer with TRPC4 and/or TRPC5. Forms a heteromeric ion channel with TRPC4, with a 1:3 TRPC1:TRPC4 stoichiometry. Unlike other TRP channel proteins, does not form a homomeric channel. Interacts with TRPC4AP. Interacts with ITPR3. Interacts with MX1 and RNF24. Interacts with FKBP4. Interacts with PLSCR1. Interacts with PKD2L2. Forms a heterotetramer with PKD2 with a 2:2 stoichiometry; has distinct channel properties separate from PKD2 or TRPC1 homomers alone. In terms of assembly, interacts with isoform 2 of TRPC3. Post-translationally, activation of PRKCA induces phosphorylation of TRPC1 and subsequent Ca2+ entry into cells. In terms of tissue distribution, seems to be ubiquitous.

It localises to the cell membrane. It catalyses the reaction Ca(2+)(in) = Ca(2+)(out). The catalysed reaction is Na(+)(in) = Na(+)(out). The enzyme catalyses Li(+)(in) = Li(+)(out). It carries out the reaction Cs(+)(in) = Cs(+)(out). Its activity is regulated as follows. May be operated by a phosphatidylinositol second messenger system activated by receptor tyrosine kinases or G-protein coupled receptors. Also activated by intracellular calcium store depletion. Inhibited by xanthine-based inhibitor Pico145. Functionally, forms a receptor-activated non-selective calcium permeant cation channel. Forms a heteromeric ion channel with TRPC4 or TRPC5 that has reduced calcium permeability compared to the homomeric TRPC4 or TRPC5 channel. Also permeable to monovalent ions including sodium, lithium and cesium ions. Its function is as follows. Forms a receptor-activated non-selective calcium permeant cation channel. Also activated by intracellular calcium store depletion. The protein is Short transient receptor potential channel 1 (TRPC1) of Homo sapiens (Human).